The chain runs to 148 residues: uncharacterized protein (148 aa).

The chain crosses the membrane as a helical span at residues 1–21 (MLQNYAIVLGMAVAVAIWYFF). Residues 27-61 (APPGPNPPKPDPPKPDPPKMHMPKKKPHWMDPHLT) form a disordered region.

It localises to the host membrane. This is an uncharacterized protein from Frog virus 3 (isolate Goorha) (FV-3).